Reading from the N-terminus, the 234-residue chain is Thiamine-phosphate synthase (234 aa).

4-amino-2-methyl-5-(diphosphooxymethyl)pyrimidine-binding positions include 65–69 (QYRNK) and Asn97. Residues Asp98 and Asp117 each contribute to the Mg(2+) site. Ser136 is a binding site for 4-amino-2-methyl-5-(diphosphooxymethyl)pyrimidine. 2-[(2R,5Z)-2-carboxy-4-methylthiazol-5(2H)-ylidene]ethyl phosphate is bound at residue 163–165 (SHT). Lys166 serves as a coordination point for 4-amino-2-methyl-5-(diphosphooxymethyl)pyrimidine. Residues Gly192 and 212–213 (IS) contribute to the 2-[(2R,5Z)-2-carboxy-4-methylthiazol-5(2H)-ylidene]ethyl phosphate site.

Belongs to the thiamine-phosphate synthase family. The cofactor is Mg(2+).

The catalysed reaction is 2-[(2R,5Z)-2-carboxy-4-methylthiazol-5(2H)-ylidene]ethyl phosphate + 4-amino-2-methyl-5-(diphosphooxymethyl)pyrimidine + 2 H(+) = thiamine phosphate + CO2 + diphosphate. It carries out the reaction 2-(2-carboxy-4-methylthiazol-5-yl)ethyl phosphate + 4-amino-2-methyl-5-(diphosphooxymethyl)pyrimidine + 2 H(+) = thiamine phosphate + CO2 + diphosphate. It catalyses the reaction 4-methyl-5-(2-phosphooxyethyl)-thiazole + 4-amino-2-methyl-5-(diphosphooxymethyl)pyrimidine + H(+) = thiamine phosphate + diphosphate. The protein operates within cofactor biosynthesis; thiamine diphosphate biosynthesis; thiamine phosphate from 4-amino-2-methyl-5-diphosphomethylpyrimidine and 4-methyl-5-(2-phosphoethyl)-thiazole: step 1/1. Functionally, condenses 4-methyl-5-(beta-hydroxyethyl)thiazole monophosphate (THZ-P) and 2-methyl-4-amino-5-hydroxymethyl pyrimidine pyrophosphate (HMP-PP) to form thiamine monophosphate (TMP). The sequence is that of Thiamine-phosphate synthase from Xylella fastidiosa (strain 9a5c).